The following is a 448-amino-acid chain: MSQQEFDVLVIGAGISGAALFYELARYTNIKNIALIEKYNTAATLNSKGTSNSQTIHCGDIETNYTLEKARKVKRTADMIVKYGLMQNAQNNFMFSHQKMALAVGDIECDYMKKRYEEFKELYPYIKFFDKAKIKQIEPKVVLGEDCNQDRPENICAMGVESGEVFTTVDFGKMSINLIEQAQKQNKNTFVAFNQEIIHIEKKDDIFILKTSNHQEYHAKSVVVNAGAHSLYLAHKMNLGMDKSCWPVAGSFYLTKQKLLNGKVYMVQNPKLPFAALHGDPDLLADMNTRFGPTALVIPKLERYHGLKSVPEFFEALKLDKTVLKVTFNMFKDATIRNYIFYNYLFELPFVDKSLFVKDAKKIVPSLKASDIYYAKGFGGVRPQVIDKTKGELMLGEASITETPGIIFNMTPSPGATSCLGNAERDAKLVCNYLGMEFNEDKFSSELL.

It belongs to the MQO family. The cofactor is FAD.

It carries out the reaction (S)-malate + a quinone = a quinol + oxaloacetate. The protein operates within carbohydrate metabolism; tricarboxylic acid cycle; oxaloacetate from (S)-malate (quinone route): step 1/1. In terms of biological role, catalyzes oxidation of malate to oxaloacetate in the citric acid cycle. Donates electrons to quinones of the electron transfer chain. This Campylobacter jejuni subsp. jejuni serotype O:2 (strain ATCC 700819 / NCTC 11168) protein is Probable malate:quinone oxidoreductase (mqo).